Reading from the N-terminus, the 257-residue chain is MVSWMICRLVVLVFGMLCPAYASYKAVKTKNIREYVRWMMYWIVFALFMAAEIITDIFISWFPFYYEIKMAFVLWLLSPYTKGASLLYRKFVHPSLSRHEKEIDAYIVQAKERSYETVLSFGKRGLNIAASAAVQAATKSQGALAGRLRSFSMQDLRAIPDAPAPAYHDPLYLEDQVPHQRPPIGYRAGGLQDSDTEDECWSDTEAVPRAPARPREKPLIRSQSLRVVKRKPPVREGTSRSLKVRTRKKTVPSDMDS.

2 consecutive transmembrane segments (helical) span residues 1–21 (MVSW…CPAY) and 42–62 (WIVF…ISWF). Residues serine 152 and serine 194 each carry the phosphoserine modification. Residues 178–257 (PHQRPPIGYR…KKTVPSDMDS (80 aa)) form a disordered region. Threonine 196 bears the Phosphothreonine mark. Position 202 is a phosphoserine (serine 202). Position 250 is a phosphothreonine (threonine 250). A Phosphoserine modification is found at serine 253.

It belongs to the DP1 family.

It localises to the endoplasmic reticulum membrane. Microtubule-binding protein required to ensure proper cell division and nuclear envelope reassembly by sequestering the endoplasmic reticulum away from chromosomes during mitosis. Probably acts by clearing the endoplasmic reticulum membrane from metaphase chromosomes. The polypeptide is Receptor expression-enhancing protein 4 (REEP4) (Pongo abelii (Sumatran orangutan)).